The chain runs to 262 residues: Acyl-[acyl-carrier-protein]--UDP-N-acetylglucosamine O-acyltransferase (262 aa).

The protein belongs to the transferase hexapeptide repeat family. LpxA subfamily. Homotrimer.

It localises to the cytoplasm. It catalyses the reaction a (3R)-hydroxyacyl-[ACP] + UDP-N-acetyl-alpha-D-glucosamine = a UDP-3-O-[(3R)-3-hydroxyacyl]-N-acetyl-alpha-D-glucosamine + holo-[ACP]. It participates in glycolipid biosynthesis; lipid IV(A) biosynthesis; lipid IV(A) from (3R)-3-hydroxytetradecanoyl-[acyl-carrier-protein] and UDP-N-acetyl-alpha-D-glucosamine: step 1/6. Involved in the biosynthesis of lipid A, a phosphorylated glycolipid that anchors the lipopolysaccharide to the outer membrane of the cell. The sequence is that of Acyl-[acyl-carrier-protein]--UDP-N-acetylglucosamine O-acyltransferase from Yersinia enterocolitica serotype O:8 / biotype 1B (strain NCTC 13174 / 8081).